A 398-amino-acid polypeptide reads, in one-letter code: Bone morphogenetic protein 2-B (398 aa).

Residues 1 to 23 (MVAGIHSLLLLQFYQILLSGCTG) form the signal peptide. Residues 24 to 284 (LVPEEGKRKY…GHALHKRQKR (261 aa)) constitute a propeptide that is removed on maturation. Asn137, Asn202, Asn237, and Asn340 each carry an N-linked (GlcNAc...) asparagine glycan. 3 disulfides stabilise this stretch: Cys298–Cys363, Cys327–Cys395, and Cys331–Cys397.

It belongs to the TGF-beta family. Homodimer; disulfide-linked.

The protein localises to the secreted. Induces cartilage and bone formation. This is Bone morphogenetic protein 2-B (bmp2-b) from Xenopus laevis (African clawed frog).